A 290-amino-acid chain; its full sequence is Protoheme IX farnesyltransferase (290 aa).

The next 9 helical transmembrane spans lie at 8–28 (LTKPGIIMGNLISVLAGYFLA), 36–56 (LSLLVYTMLGVALVIASGCVV), 81–101 (INIEFAFLFAIIMLLIGTGLL), 108–128 (LSAVMVLLGYVFYVFFYTMWY), 133–153 (VYGTLVGSVSGAIPPLVGYLA), 163–183 (VLLFGLFCLWQMPHSYAIAMF), 209–229 (IMIYVLVFSVVALGLYAFGHT), 230–247 (GYEYLAVVAISCYGWFKV), and 270–290 (LAITAFSTVLGIELLPFSITF).

Belongs to the UbiA prenyltransferase family. Protoheme IX farnesyltransferase subfamily.

The protein localises to the cell inner membrane. It carries out the reaction heme b + (2E,6E)-farnesyl diphosphate + H2O = Fe(II)-heme o + diphosphate. The protein operates within porphyrin-containing compound metabolism; heme O biosynthesis; heme O from protoheme: step 1/1. Functionally, converts heme B (protoheme IX) to heme O by substitution of the vinyl group on carbon 2 of heme B porphyrin ring with a hydroxyethyl farnesyl side group. In Aliivibrio salmonicida (strain LFI1238) (Vibrio salmonicida (strain LFI1238)), this protein is Protoheme IX farnesyltransferase.